Here is a 412-residue protein sequence, read N- to C-terminus: DNA replication and repair protein RecF (412 aa).

Gly30–Thr37 is an ATP binding site.

It belongs to the RecF family.

It localises to the cytoplasm. Its function is as follows. The RecF protein is involved in DNA metabolism; it is required for DNA replication and normal SOS inducibility. RecF binds preferentially to single-stranded, linear DNA. It also seems to bind ATP. The polypeptide is DNA replication and repair protein RecF (Bifidobacterium longum subsp. infantis (strain ATCC 15697 / DSM 20088 / JCM 1222 / NCTC 11817 / S12)).